Reading from the N-terminus, the 165-residue chain is Nucleotide-binding protein Tfu_2672 (165 aa).

This sequence belongs to the YajQ family.

In terms of biological role, nucleotide-binding protein. This Thermobifida fusca (strain YX) protein is Nucleotide-binding protein Tfu_2672.